Reading from the N-terminus, the 68-residue chain is Large ribosomal subunit protein uL29 (68 aa).

The protein belongs to the universal ribosomal protein uL29 family.

This is Large ribosomal subunit protein uL29 from Chloroflexus aggregans (strain MD-66 / DSM 9485).